A 185-amino-acid chain; its full sequence is ATP synthase subunit b, chloroplastic (185 aa).

A helical transmembrane segment spans residues 31–53; sequence IINITVVLGILIYFGKGVLSNLL.

It belongs to the ATPase B chain family. As to quaternary structure, F-type ATPases have 2 components, F(1) - the catalytic core - and F(0) - the membrane proton channel. F(1) has five subunits: alpha(3), beta(3), gamma(1), delta(1), epsilon(1). F(0) has four main subunits: a(1), b(1), b'(1) and c(10-14). The alpha and beta chains form an alternating ring which encloses part of the gamma chain. F(1) is attached to F(0) by a central stalk formed by the gamma and epsilon chains, while a peripheral stalk is formed by the delta, b and b' chains.

The protein localises to the plastid. It localises to the chloroplast thylakoid membrane. Its function is as follows. F(1)F(0) ATP synthase produces ATP from ADP in the presence of a proton or sodium gradient. F-type ATPases consist of two structural domains, F(1) containing the extramembraneous catalytic core and F(0) containing the membrane proton channel, linked together by a central stalk and a peripheral stalk. During catalysis, ATP synthesis in the catalytic domain of F(1) is coupled via a rotary mechanism of the central stalk subunits to proton translocation. In terms of biological role, component of the F(0) channel, it forms part of the peripheral stalk, linking F(1) to F(0). The protein is ATP synthase subunit b, chloroplastic of Gnetum parvifolium (Small-leaved jointfir).